The sequence spans 271 residues: tRNA pseudouridine synthase A (271 aa).

Residue Asp52 is the Nucleophile of the active site. Tyr110 provides a ligand contact to substrate.

Belongs to the tRNA pseudouridine synthase TruA family. As to quaternary structure, homodimer.

It catalyses the reaction uridine(38/39/40) in tRNA = pseudouridine(38/39/40) in tRNA. Functionally, formation of pseudouridine at positions 38, 39 and 40 in the anticodon stem and loop of transfer RNAs. The protein is tRNA pseudouridine synthase A of Burkholderia mallei (strain NCTC 10247).